The following is an 82-amino-acid chain: MNPIVSGASVIAAGLAIGLASIGPGIGQGTAAAQAVEGLARQPEAEGKIRGTLLLSLAFMESLTIYGLVVALCLLFANPFAG.

The next 2 helical transmembrane spans lie at 7–27 (GASV…PGIG) and 57–77 (LAFM…LLFA).

It belongs to the ATPase C chain family. F-type ATPases have 2 components, F(1) - the catalytic core - and F(0) - the membrane proton channel. F(1) has five subunits: alpha(3), beta(3), gamma(1), delta(1), epsilon(1). F(0) has four main subunits: a(1), b(1), b'(1) and c(10-14). The alpha and beta chains form an alternating ring which encloses part of the gamma chain. F(1) is attached to F(0) by a central stalk formed by the gamma and epsilon chains, while a peripheral stalk is formed by the delta, b and b' chains.

The protein resides in the plastid. It is found in the chloroplast thylakoid membrane. F(1)F(0) ATP synthase produces ATP from ADP in the presence of a proton or sodium gradient. F-type ATPases consist of two structural domains, F(1) containing the extramembraneous catalytic core and F(0) containing the membrane proton channel, linked together by a central stalk and a peripheral stalk. During catalysis, ATP synthesis in the catalytic domain of F(1) is coupled via a rotary mechanism of the central stalk subunits to proton translocation. Its function is as follows. Key component of the F(0) channel; it plays a direct role in translocation across the membrane. A homomeric c-ring of between 10-14 subunits forms the central stalk rotor element with the F(1) delta and epsilon subunits. This Emiliania huxleyi (Coccolithophore) protein is ATP synthase subunit c, chloroplastic.